We begin with the raw amino-acid sequence, 58 residues long: Large ribosomal subunit protein bL32c (58 aa).

The protein belongs to the bacterial ribosomal protein bL32 family.

It localises to the plastid. Its subcellular location is the chloroplast. The sequence is that of Large ribosomal subunit protein bL32c from Chaetosphaeridium globosum (Charophycean green alga).